Reading from the N-terminus, the 473-residue chain is Trehalose-6-phosphate synthase (473 aa).

Arginine 10 provides a ligand contact to D-glucose 6-phosphate. 21-22 serves as a coordination point for UDP-alpha-D-glucose; it reads GG. D-glucose 6-phosphate is bound by residues tyrosine 76 and aspartate 130. Residues arginine 262 and lysine 267 each contribute to the UDP-alpha-D-glucose site. Residue arginine 300 participates in D-glucose 6-phosphate binding. UDP-alpha-D-glucose is bound by residues phenylalanine 339 and 365 to 369; that span reads LVAKE.

Belongs to the glycosyltransferase 20 family. Homotetramer.

It catalyses the reaction D-glucose 6-phosphate + UDP-alpha-D-glucose = alpha,alpha-trehalose 6-phosphate + UDP + H(+). The protein operates within glycan biosynthesis; trehalose biosynthesis. Functionally, probably involved in the osmoprotection via the biosynthesis of trehalose. Catalyzes the transfer of glucose from UDP-alpha-D-glucose (UDP-Glc) to D-glucose 6-phosphate (Glc-6-P) to form trehalose-6-phosphate. Acts with retention of the anomeric configuration of the UDP-sugar donor. The protein is Trehalose-6-phosphate synthase (otsA) of Salmonella arizonae (strain ATCC BAA-731 / CDC346-86 / RSK2980).